Consider the following 861-residue polypeptide: ToMV resistance protein Tm-2(GCR236) (861 aa).

Residues 63 to 83 (VKNLLKDIQELAGDVEDLLDD) are a coiled coil. An NB-ARC domain is found at 162 to 388 (DDFNMLQAKL…LESMGHKVQD (227 aa)). ATP is bound at residue 185-192 (GMPGLGKT). 13 LRR repeats span residues 225–248 (LDIA…NLRS), 305–327 (LHAL…IFNF), 388–411 (DGCA…CFLY), 449–472 (LAED…TYNG), 510–536 (VARL…KLEK), 585–608 (MTCL…IVKL), 609–631 (TRLE…VWES), 652–680 (ISSF…FFEP), 689–710 (LRKL…IFSP), 712–735 (LKAL…LSSY), 736–758 (PHIA…SFPP), 784–810 (LRKL…GYSF), and 811–835 (PQLE…DVSM).

The protein belongs to the disease resistance NB-LRR family. As to quaternary structure, (Microbial infection) Interacts with tobamoviruses mouvement protein at the plasma membrane; this interaction triggers defense responses leading to programmed cell death. Binds to HSP90 proteins; this interaction seems required for defense responses toward tobamoviruses.

The protein resides in the cell membrane. Inhibitor of viral mouvements which confers resistance to some tobamoviruses including tomato mosaic virus (ToMV) (e.g. isolates L, W3 and SL-1) and tobacco mosaic virus (TMV), but not to resistance-breaking isolates (e.g. B7, LT1, LII, Ltbl, ToMV2, and ToMV1-2) ToMV and tomato brown rugose fruit virus (ToBRFV). Elicits a hypersensitive reaction in response to avirulent (Avr) movement proteins from resistance inducing tobamoviruses (e.g. ToMV and TMV) strains, thus leading to programmed cell death. The polypeptide is ToMV resistance protein Tm-2(GCR236) (Solanum lycopersicum (Tomato)).